Here is a 274-residue protein sequence, read N- to C-terminus: NH(3)-dependent NAD(+) synthetase (274 aa).

Residue 46–53 (GISGGQDS) participates in ATP binding. Asp52 is a binding site for Mg(2+). Arg140 contributes to the deamido-NAD(+) binding site. Residue Thr160 participates in ATP binding. Mg(2+) is bound at residue Glu165. Residues Lys173 and Asp180 each coordinate deamido-NAD(+). The ATP site is built by Lys189 and Thr211. 260–261 (HK) contacts deamido-NAD(+).

Belongs to the NAD synthetase family. In terms of assembly, homodimer.

The enzyme catalyses deamido-NAD(+) + NH4(+) + ATP = AMP + diphosphate + NAD(+) + H(+). The protein operates within cofactor biosynthesis; NAD(+) biosynthesis; NAD(+) from deamido-NAD(+) (ammonia route): step 1/1. Functionally, catalyzes the ATP-dependent amidation of deamido-NAD to form NAD. Uses ammonia as a nitrogen source. This is NH(3)-dependent NAD(+) synthetase from Streptococcus equi subsp. zooepidemicus (strain MGCS10565).